The following is a 386-amino-acid chain: Innexin inx4 (386 aa).

The Cytoplasmic portion of the chain corresponds to 1-21; sequence MLEFVRPLQSILQIKQVNSTD. The chain crosses the membrane as a helical span at residues 22-42; that stretch reads LVWRLHCRVTVFLLLLASLLL. Topologically, residues 43-111 are extracellular; that stretch reads SARQYFGNPI…ESERSYQKYY (69 aa). Residues 112-132 form a helical membrane-spanning segment; sequence QWVVFILALQACMFSVPNFLW. Residues 133–187 are Cytoplasmic-facing; the sequence is KAWEAGRLQSLCDGLTTPIVPDHWEKTRKKQLITYLSADFPRLHRTYLLRYCFCT. A helical membrane pass occupies residues 188-208; the sequence is LLNFCNVLLNIFLVNVIFSGF. Residues 209 to 272 lie on the Extracellular side of the membrane; sequence WSNYHPAVKA…LNVVNEKIFA (64 aa). The helical transmembrane segment at 273-293 threads the bilayer; the sequence is FIWLWFLGLLVISMLNLLFWI. Residues 294–386 are Cytoplasmic-facing; sequence VVLCSKGFRL…DPEGYDEEGV (93 aa). Residues 358 to 386 are disordered; the sequence is HNGHKTFRMPKGGEPDFYTDPEGYDEEGV. Residues 374–386 show a composition bias toward acidic residues; it reads FYTDPEGYDEEGV.

The protein belongs to the pannexin family.

The protein localises to the cell membrane. It localises to the cell junction. It is found in the gap junction. Its function is as follows. Structural component of gap junctions. Required for normal development of ovary. Required for normal egg production after blood meal. Required for normal development of testis. In terms of biological role, (Microbial infection) Modulates the development of Plasmodium falciparum oocysts. This Anopheles gambiae (African malaria mosquito) protein is Innexin inx4.